Reading from the N-terminus, the 673-residue chain is MESIIQQINQLRTSLRHHEYQYHVLDAPEVPDAEYDRLMGELRALESAHPELITADSPTQRVGAAPLAAFDQVRHEVPMLSLDNVFDEESFLAFYKRVQDRLKSSDPLTFCCELKLDGLAVSLLYEDGELVRAATRGDGTTGENITSNVRTIRAIPLRLTGDNIPRRLEVRGEVFMPQAGFEQMNEEARRKDGKIFANPRNAAAGSIRQLDPRITAKRPLTFFCYGVGLLEGGELPRSHWQRLMQFKDWGLPVSDRAKRCTGSDEVLAFYRQVEQDRTQLGFDIDGVVVKIDDIDLQETLGFVARAPRWATAFKFPAQEQITQVREVEFQVGRTGAITPVARLEPVLVAGVIVSNATLHNADEIERLGLRIGDTVIVRRAGDVIPQVVGVIAERRPADAREILFPQHCPVCGSDVERVEGEAVARCTGGLICAAQRKEALKHFVSRRALDVDGMGDKIIEQLVEKEYVKNPADLFRLSAGILTGLDRMGPKSAQNLVNALEKSKQTTFARFLYALGIREVGEATAANLAAHFGTLDKLLAADIEALKEVPEVGEIVAKHTRHFLDEELNQQVIQELVSDEIGINWPAPVVIVAEEIDSPFAGKTVVLTGSLSQLSRDEAKDRLTALGAKVSGSVSKKTDLVIAGEAAGSKLVKAQELGIEVIDEAEMIRLLGA.

NAD(+) contacts are provided by residues 32 to 36, 81 to 82, and glutamate 113; these read DAEYD and SL. Lysine 115 (N6-AMP-lysine intermediate) is an active-site residue. NAD(+)-binding residues include arginine 136, glutamate 173, lysine 290, and lysine 314. Residues cysteine 408, cysteine 411, cysteine 426, and cysteine 432 each contribute to the Zn(2+) site. A BRCT domain is found at 595 to 673; the sequence is EIDSPFAGKT…EAEMIRLLGA (79 aa).

Belongs to the NAD-dependent DNA ligase family. LigA subfamily. Mg(2+) is required as a cofactor. It depends on Mn(2+) as a cofactor.

The catalysed reaction is NAD(+) + (deoxyribonucleotide)n-3'-hydroxyl + 5'-phospho-(deoxyribonucleotide)m = (deoxyribonucleotide)n+m + AMP + beta-nicotinamide D-nucleotide.. Its function is as follows. DNA ligase that catalyzes the formation of phosphodiester linkages between 5'-phosphoryl and 3'-hydroxyl groups in double-stranded DNA using NAD as a coenzyme and as the energy source for the reaction. It is essential for DNA replication and repair of damaged DNA. In Serratia proteamaculans (strain 568), this protein is DNA ligase.